The following is a 228-amino-acid chain: Non-fluorescent flavoprotein (228 aa).

The protein belongs to the bacterial luciferase oxidoreductase family. In terms of assembly, homodimer. It depends on FMN as a cofactor.

This chain is Non-fluorescent flavoprotein (luxF), found in Photobacterium leiognathi.